We begin with the raw amino-acid sequence, 133 residues long: Transcription antitermination protein NusB (133 aa).

The protein belongs to the NusB family.

Involved in transcription antitermination. Required for transcription of ribosomal RNA (rRNA) genes. Binds specifically to the boxA antiterminator sequence of the ribosomal RNA (rrn) operons. In Shouchella clausii (strain KSM-K16) (Alkalihalobacillus clausii), this protein is Transcription antitermination protein NusB.